Reading from the N-terminus, the 418-residue chain is Glucose-1-phosphate adenylyltransferase (418 aa).

Alpha-D-glucose 1-phosphate contacts are provided by residues Tyr-104, Gly-169, 184-185 (EK), and Ser-202.

It belongs to the bacterial/plant glucose-1-phosphate adenylyltransferase family. In terms of assembly, homotetramer.

The enzyme catalyses alpha-D-glucose 1-phosphate + ATP + H(+) = ADP-alpha-D-glucose + diphosphate. Its pathway is glycan biosynthesis; glycogen biosynthesis. Involved in the biosynthesis of ADP-glucose, a building block required for the elongation reactions to produce glycogen. Catalyzes the reaction between ATP and alpha-D-glucose 1-phosphate (G1P) to produce pyrophosphate and ADP-Glc. This Jannaschia sp. (strain CCS1) protein is Glucose-1-phosphate adenylyltransferase.